A 159-amino-acid polypeptide reads, in one-letter code: MSDRIYLTRDGYNRLKEELYVLIHQTRKEVLEKIAEARSHGDLSENAEYDAAREQQSQTEARIADLENKLSTATILDPKLIKTDKVYILTSVKLKNLQVEDEVIEYTLVSSEEADTDLGKISVRSPVGRSLIGKTVGDKVHITVPKGELHFEILDIFVK.

The stretch at 44–75 forms a coiled coil; it reads SENAEYDAAREQQSQTEARIADLENKLSTATI.

This sequence belongs to the GreA/GreB family.

Its function is as follows. Necessary for efficient RNA polymerase transcription elongation past template-encoded arresting sites. The arresting sites in DNA have the property of trapping a certain fraction of elongating RNA polymerases that pass through, resulting in locked ternary complexes. Cleavage of the nascent transcript by cleavage factors such as GreA or GreB allows the resumption of elongation from the new 3'terminus. GreA releases sequences of 2 to 3 nucleotides. This Chlorobium limicola (strain DSM 245 / NBRC 103803 / 6330) protein is Transcription elongation factor GreA.